The primary structure comprises 120 residues: Ribonuclease P protein component (120 aa).

The protein belongs to the RnpA family. As to quaternary structure, consists of a catalytic RNA component (M1 or rnpB) and a protein subunit.

The catalysed reaction is Endonucleolytic cleavage of RNA, removing 5'-extranucleotides from tRNA precursor.. In terms of biological role, RNaseP catalyzes the removal of the 5'-leader sequence from pre-tRNA to produce the mature 5'-terminus. It can also cleave other RNA substrates such as 4.5S RNA. The protein component plays an auxiliary but essential role in vivo by binding to the 5'-leader sequence and broadening the substrate specificity of the ribozyme. This is Ribonuclease P protein component from Dehalococcoides mccartyi (strain CBDB1).